Consider the following 1554-residue polypeptide: Myosin-2 (1554 aa).

The region spanning 4-57 (EVGTRCWYPDKQQGWIGGEITKHTNLSNKHQLELTLEDNQIVEIESETLDETKD) is the Myosin N-terminal SH3-like domain. Positions 70-774 (EATEDLTSLS…MLAYLEKLRS (705 aa)) constitute a Myosin motor domain. Residue 164 to 171 (GESGAGKT) coordinates ATP. An actin-binding region spans residues 443–523 (FIGVLDIYGF…LGILSLLDEE (81 aa)). 6 IQ domains span residues 778–798 (HNSSVLIQKKVKAVYYRKKYL), 800–824 (IISSIRNFHSRSEGFLTRQRVDLEF), 825–847 (KTQAAILIQSMVRSTSTRNKTIS), 848–872 (LLSAITRLQSLVRKQLAQKELLQRR), 873–895 (QRDAAVSIQKKIRAFEPRQSFNT), and 896–925 (TRRSTVVVQSLVRKKFAQKKLKDLKTEAKS). Residues 926–1079 (VNHLKEVSYK…IARLQAAVRS (154 aa)) are a coiled coil. Positions 1080 to 1554 (GVTSSTITST…VTVQESQRTE (475 aa)) are non alpha-helical, tail domain. Residues 1082-1093 (TSSTITSTPTAS) show a composition bias toward low complexity. The disordered stretch occupies residues 1082–1109 (TSSTITSTPTASRRFSAHSSVADGTSPR). Residues 1098–1109 (AHSSVADGTSPR) show a composition bias toward polar residues. The 276-residue stretch at 1205 to 1480 (AEVLSTIQKL…LNFVADRVKK (276 aa)) folds into the Dilute domain.

Belongs to the TRAFAC class myosin-kinesin ATPase superfamily. Myosin family. Homodimer. Interacts with calmodulin (CMD1) and the myosin light chain MLC1 through its IQ repeats.

Its function is as follows. Myosin heavy chain that is required for the cell cycle-regulated transport of various organelles and proteins for their segregation. Functions by binding with its tail domain to receptor proteins on organelles and exerting force with its N-terminal motor domain against actin filaments, thereby transporting its cargo along polarized actin cables. This is Myosin-2 (MYO2) from Lachancea kluyveri (strain ATCC 58438 / CBS 3082 / BCRC 21498 / NBRC 1685 / JCM 7257 / NCYC 543 / NRRL Y-12651) (Yeast).